We begin with the raw amino-acid sequence, 352 residues long: Protein RecA (352 aa).

Residue 67–74 (GPESSGKT) coordinates ATP.

This sequence belongs to the RecA family.

The protein resides in the cytoplasm. Can catalyze the hydrolysis of ATP in the presence of single-stranded DNA, the ATP-dependent uptake of single-stranded DNA by duplex DNA, and the ATP-dependent hybridization of homologous single-stranded DNAs. It interacts with LexA causing its activation and leading to its autocatalytic cleavage. In Klebsiella pneumoniae subsp. pneumoniae (strain ATCC 700721 / MGH 78578), this protein is Protein RecA.